Here is a 360-residue protein sequence, read N- to C-terminus: 3-isopropylmalate dehydrogenase (360 aa).

76-89 (GPKWDTIERDIRPE) provides a ligand contact to NAD(+). Substrate is bound by residues arginine 96, arginine 106, arginine 134, and aspartate 224. Aspartate 224, aspartate 248, and aspartate 252 together coordinate Mg(2+). Position 282-294 (282-294 (GSAPDIAGKGIAN)) interacts with NAD(+).

Belongs to the isocitrate and isopropylmalate dehydrogenases family. LeuB type 1 subfamily. Homodimer. The cofactor is Mg(2+). Mn(2+) is required as a cofactor.

The protein localises to the cytoplasm. It catalyses the reaction (2R,3S)-3-isopropylmalate + NAD(+) = 4-methyl-2-oxopentanoate + CO2 + NADH. It functions in the pathway amino-acid biosynthesis; L-leucine biosynthesis; L-leucine from 3-methyl-2-oxobutanoate: step 3/4. Its function is as follows. Catalyzes the oxidation of 3-carboxy-2-hydroxy-4-methylpentanoate (3-isopropylmalate) to 3-carboxy-4-methyl-2-oxopentanoate. The product decarboxylates to 4-methyl-2 oxopentanoate. The chain is 3-isopropylmalate dehydrogenase from Pseudomonas savastanoi pv. phaseolicola (strain 1448A / Race 6) (Pseudomonas syringae pv. phaseolicola (strain 1448A / Race 6)).